The chain runs to 215 residues: S-crystallin 4 (215 aa).

The GST N-terminal domain occupies Pro2–Gly80. In terms of domain architecture, GST C-terminal spans Asn82 to Phe215.

The protein belongs to the GST superfamily. Lens.

Functionally, S-crystallins are structural components of squids and octopi eye lens. Contains relatively little if any GST activity. The chain is S-crystallin 4 from Enteroctopus dofleini (North Pacific giant octopus).